Consider the following 85-residue polypeptide: Small ribosomal subunit protein uS15 (85 aa).

The protein belongs to the universal ribosomal protein uS15 family. As to quaternary structure, part of the 30S ribosomal subunit. Forms a bridge to the 50S subunit in the 70S ribosome, contacting the 23S rRNA.

Functionally, one of the primary rRNA binding proteins, it binds directly to 16S rRNA where it helps nucleate assembly of the platform of the 30S subunit by binding and bridging several RNA helices of the 16S rRNA. In terms of biological role, forms an intersubunit bridge (bridge B4) with the 23S rRNA of the 50S subunit in the ribosome. The polypeptide is Small ribosomal subunit protein uS15 (Fusobacterium nucleatum subsp. nucleatum (strain ATCC 25586 / DSM 15643 / BCRC 10681 / CIP 101130 / JCM 8532 / KCTC 2640 / LMG 13131 / VPI 4355)).